The chain runs to 648 residues: Acyl-CoA-binding domain-containing protein 5 (648 aa).

Positions 13-107 (YPERFYAAAS…LEEADPGWYP (95 aa)) constitute an ACB domain. An acyl-CoA is bound by residues Lys-34, 49–53 (YTLHQ), and Lys-75. Kelch repeat units lie at residues 196–244 (KMYM…KLTH), 256–306 (QLLS…LVGK), 307–357 (SLVI…VHAE), 359–408 (YLLI…TIGE), 409–457 (NWYI…LVVS), and 464–509 (IVVA…AVNN). Ser-517 carries the phosphoserine modification. Positions 520-632 (KVEGKADRII…AATMNAKRQS (113 aa)) form a coiled coil. Residues 625 to 634 (TMNAKRQSSG) show a composition bias toward polar residues. The segment at 625 to 648 (TMNAKRQSSGGVWGWLAGTPPPKT) is disordered.

This sequence belongs to the ACBP family. In terms of tissue distribution, expressed in roots, stems, leaves, flowers and siliques.

Its subcellular location is the cytoplasm. In terms of biological role, binds medium- and long-chain acyl-CoA esters with very high affinity. Can interact in vitro with oleoyl-CoA, barely with palmitoyl-CoA, but not with arachidonyl-CoA. May function as an intracellular carrier of acyl-CoA esters. This Arabidopsis thaliana (Mouse-ear cress) protein is Acyl-CoA-binding domain-containing protein 5 (ACBP5).